A 248-amino-acid polypeptide reads, in one-letter code: E3 SUMO-protein ligase NSE2 (248 aa).

Position 1 is an N-acetylmethionine (methionine 1). Glycyl lysine isopeptide (Lys-Gly) (interchain with G-Cter in SUMO2) cross-links involve residues lysine 92 and lysine 109. Serine 118 carries the phosphoserine modification. Residues lysine 127 and lysine 132 each participate in a glycyl lysine isopeptide (Lys-Gly) (interchain with G-Cter in SUMO2) cross-link. An SP-RING-type zinc finger spans residues 156–242; the sequence is VDEDMIVTQS…LRRAIESHKK (87 aa). Residues cysteine 187, histidine 189, cysteine 212, and cysteine 217 each coordinate Zn(2+).

Belongs to the NSE2 family. As to quaternary structure, component of the SMC5-SMC6 complex which consists at least of SMC5, SMC6, NSMCE2, NSMCE1, NSMCE4A or EID3 and NSMCE3. Post-translationally, sumoylated, possibly via autosumoylation.

Its subcellular location is the nucleus. The protein resides in the chromosome. It is found in the telomere. The protein localises to the PML body. The protein operates within protein modification; protein sumoylation. Its function is as follows. E3 SUMO-protein ligase component of the SMC5-SMC6 complex, a complex involved in DNA double-strand break repair by homologous recombination. Is not be required for the stability of the complex. The complex may promote sister chromatid homologous recombination by recruiting the SMC1-SMC3 cohesin complex to double-strand breaks. Acts as an E3 ligase mediating SUMO attachment to various proteins such as SMC6L1 and TSNAX, the shelterin complex subunits TERF1, TERF2, TINF2 and TERF2IP, RAD51AP1, and maybe the cohesin components RAD21 and STAG2. Required for recruitment of telomeres to PML nuclear bodies. Required for sister chromatid cohesion during prometaphase and mitotic progression. In Bos taurus (Bovine), this protein is E3 SUMO-protein ligase NSE2 (NSMCE2).